The chain runs to 138 residues: Protein FAM136A (138 aa).

The protein belongs to the FAM136 family.

The protein is Protein FAM136A (fam136a) of Xenopus tropicalis (Western clawed frog).